A 1045-amino-acid chain; its full sequence is B3 domain-containing protein REM13 (1045 aa).

A DNA-binding region (TF-B3 1) is located at residues 7-96 (YPQFFHTLVP…VFHVSNLGPN (90 aa)). The tract at residues 121-147 (NNGDVCDSEELPKEKKAKTNSEEADAV) is disordered. Positions 130–141 (ELPKEKKAKTNS) are enriched in basic and acidic residues. DNA-binding regions (TF-B3) lie at residues 157 to 253 (CFMA…FCPT) and 305 to 398 (FVTF…CSPE). The segment at 423-449 (NRDKISNNDKEENMSWERKKDHLKSRD) is disordered. A DNA-binding region (TF-B3 4) is located at residues 474 to 570 (SNDSCLVVVS…TPVLSLCPAD (97 aa)). The segment at 606–625 (IKDDNSKEKNDKEESKSVDG) is disordered. 3 consecutive DNA-binding regions (TF-B3) follow at residues 643-738 (FVTL…LRTE), 815-910 (FVTF…LRTK), and 940-1035 (FVTL…LKFS).

It is found in the nucleus. The sequence is that of B3 domain-containing protein REM13 (REM13) from Arabidopsis thaliana (Mouse-ear cress).